The chain runs to 177 residues: MSRVAKNPVKLPAGVEVKFAGQQLSVKGAKGTLELNIHSSVEIVEEAGELRFAARNGDQQTRAMAGTTRALVNNMVQGVSQGFERKLQLVGVGYKAQAKGTVLNLALGFSHPVDYELPEGITAETPSQTDILIKGIDKQLVGQVAAEIRDFRPPEPYKGKGVRYADEVVRRKEAKKK.

This sequence belongs to the universal ribosomal protein uL6 family. As to quaternary structure, part of the 50S ribosomal subunit.

In terms of biological role, this protein binds to the 23S rRNA, and is important in its secondary structure. It is located near the subunit interface in the base of the L7/L12 stalk, and near the tRNA binding site of the peptidyltransferase center. This chain is Large ribosomal subunit protein uL6, found in Pseudomonas fluorescens (strain SBW25).